A 569-amino-acid chain; its full sequence is Urease subunit alpha (569 aa).

In terms of domain architecture, Urease spans 131-569 (GGVDAHIHFI…VAMAQRYFLF (439 aa)). The Ni(2+) site is built by histidine 136, histidine 138, and lysine 219. Lysine 219 is subject to N6-carboxylysine. Histidine 221 contributes to the substrate binding site. Histidine 248 and histidine 274 together coordinate Ni(2+). The active-site Proton donor is the histidine 322. A Ni(2+)-binding site is contributed by aspartate 362.

Belongs to the metallo-dependent hydrolases superfamily. Urease alpha subunit family. In terms of assembly, heterotrimer of UreA (gamma), UreB (beta) and UreC (alpha) subunits. Three heterotrimers associate to form the active enzyme. Requires Ni cation as cofactor. Carboxylation allows a single lysine to coordinate two nickel ions.

It localises to the cytoplasm. The catalysed reaction is urea + 2 H2O + H(+) = hydrogencarbonate + 2 NH4(+). Its pathway is nitrogen metabolism; urea degradation; CO(2) and NH(3) from urea (urease route): step 1/1. The polypeptide is Urease subunit alpha (Geobacillus kaustophilus (strain HTA426)).